The sequence spans 205 residues: Urease accessory protein UreG (205 aa).

14–21 (GPVGSGKT) serves as a coordination point for GTP.

In terms of assembly, homodimer. UreD, UreF and UreG form a complex that acts as a GTP-hydrolysis-dependent molecular chaperone, activating the urease apoprotein by helping to assemble the nickel containing metallocenter of UreC. The UreE protein probably delivers the nickel.

The protein resides in the cytoplasm. Activation of apourease within the UreDFG-apoprotein complex is inhibited by zinc, copper and cobalt. Facilitates the functional incorporation of the urease nickel metallocenter. This process requires GTP hydrolysis, probably effectuated by UreG. The chain is Urease accessory protein UreG from Klebsiella aerogenes (Enterobacter aerogenes).